A 492-amino-acid chain; its full sequence is Sestrin-3 (492 aa).

The segment at 62 to 243 (LVEEYSTSGR…VCDLANDNSI (182 aa)) is N-terminal domain; may mediate the alkylhydroperoxide reductase activity. C121 functions as the Cysteine sulfenic acid (-SOH) intermediate in the catalytic mechanism. Residues 310 to 492 (PHSDFEDDVI…ALRAITRHLT (183 aa)) form a C-terminal domain; mediates TORC1 regulation region. L-leucine contacts are provided by residues 386 to 389 (TYNT), T398, and E463.

The protein belongs to the sestrin family. In terms of assembly, interacts with the GATOR2 complex which is composed of MIOS, SEC13, SEH1L, WDR24 and WDR59; the interaction is not regulated by leucine. Interacts with RRAGA, RRAGB, RRAGC and RRAGD; may function as a guanine nucleotide dissociation inhibitor for RRAGs and regulate them. Interacts with the TORC2 complex; through RICTOR. As to expression, detected in liver and skeletal muscles.

Its subcellular location is the cytoplasm. It carries out the reaction a hydroperoxide + L-cysteinyl-[protein] = S-hydroxy-L-cysteinyl-[protein] + an alcohol. Functionally, may function as an intracellular leucine sensor that negatively regulates the TORC1 signaling pathway. May also regulate the insulin-receptor signaling pathway through activation of TORC2. This metabolic regulator may also play a role in protection against oxidative and genotoxic stresses. May prevent the accumulation of reactive oxygen species (ROS) through the alkylhydroperoxide reductase activity born by the N-terminal domain of the protein. The chain is Sestrin-3 from Mus musculus (Mouse).